Reading from the N-terminus, the 272-residue chain is 2-dehydro-3-deoxyphosphooctonate aldolase (272 aa).

The protein belongs to the KdsA family.

The protein resides in the cytoplasm. The enzyme catalyses D-arabinose 5-phosphate + phosphoenolpyruvate + H2O = 3-deoxy-alpha-D-manno-2-octulosonate-8-phosphate + phosphate. The protein operates within carbohydrate biosynthesis; 3-deoxy-D-manno-octulosonate biosynthesis; 3-deoxy-D-manno-octulosonate from D-ribulose 5-phosphate: step 2/3. Its pathway is bacterial outer membrane biogenesis; lipopolysaccharide biosynthesis. The sequence is that of 2-dehydro-3-deoxyphosphooctonate aldolase from Geotalea uraniireducens (strain Rf4) (Geobacter uraniireducens).